The sequence spans 267 residues: Chaperone protein MyfB (267 aa).

Residues 1–34 form the signal peptide; that stretch reads MKYKFSHNFISYNLFLFVFMSLILLPYSHASSMG. A disulfide bridge connects residues Cys-127 and Cys-164.

The protein belongs to the periplasmic pilus chaperone family.

The protein resides in the periplasm. Functionally, required for the biogenesis of the MyfA fimbria. The protein is Chaperone protein MyfB (myfB) of Yersinia enterocolitica.